The chain runs to 196 residues: Pantothenic acid transporter PanT (196 aa).

The next 6 membrane-spanning stretches (helical) occupy residues 10 to 30, 35 to 55, 58 to 78, 99 to 119, 131 to 151, and 161 to 181; these read AILA…QFVI, FPVK…ILGW, GAFL…IVTT, WGLF…YFVY, AAFA…FLFF, and YLLG…AVIL.

As to quaternary structure, in E.coli forms a stable energy-coupling factor (ECF) transporter complex composed of 2 membrane-embedded substrate-binding protein (S component), 2 ATP-binding proteins (A and A' components) and 2 transmembrane proteins (T component), probably with a stoichiometry of 2:1:1:2. May be able to interact with more than 1 S component at a time.

It localises to the cell membrane. In terms of biological role, probably a pantothenic acid-binding protein that interacts with the energy-coupling factor (ECF) ABC-transporter complex. Unlike classic ABC transporters this ECF transporter provides the energy necessary to transport a number of different substrates. The substrates themselves are bound by transmembrane, not extracytoplasmic soluble proteins. This Lactococcus lactis subsp. cremoris (strain MG1363) protein is Pantothenic acid transporter PanT (panT).